Here is a 126-residue protein sequence, read N- to C-terminus: Protein ApaG (126 aa).

Residues 2 to 126 form the ApaG domain; it reads TELETSIKID…FRLSIPGLLH (125 aa).

The polypeptide is Protein ApaG (Shewanella woodyi (strain ATCC 51908 / MS32)).